The following is a 303-amino-acid chain: Uricase (303 aa).

Residues Lys12 and Thr60 each act as charge relay system in the active site. Urate-binding residues include Thr60, Asp61, Phe162, Arg179, Val234, Gln235, and Asn261. His263 serves as the catalytic Charge relay system. Residues 301–303 carry the Microbody targeting signal motif; it reads TKL.

This sequence belongs to the uricase family.

The protein localises to the peroxisome. The catalysed reaction is urate + O2 + H2O = 5-hydroxyisourate + H2O2. Its pathway is purine metabolism; urate degradation; (S)-allantoin from urate: step 1/3. Functionally, catalyzes the oxidation of uric acid to 5-hydroxyisourate, which is further processed to form (S)-allantoin. This Cyberlindnera jadinii (Torula yeast) protein is Uricase.